A 203-amino-acid polypeptide reads, in one-letter code: Dephospho-CoA kinase (203 aa).

The 198-residue stretch at 6-203 (ILGLTGGIGS…FYLTLRGGRA (198 aa)) folds into the DPCK domain. Residue 14-19 (GSGKSA) participates in ATP binding.

The protein belongs to the CoaE family.

Its subcellular location is the cytoplasm. It carries out the reaction 3'-dephospho-CoA + ATP = ADP + CoA + H(+). It functions in the pathway cofactor biosynthesis; coenzyme A biosynthesis; CoA from (R)-pantothenate: step 5/5. Functionally, catalyzes the phosphorylation of the 3'-hydroxyl group of dephosphocoenzyme A to form coenzyme A. This is Dephospho-CoA kinase from Pseudomonas aeruginosa (strain ATCC 15692 / DSM 22644 / CIP 104116 / JCM 14847 / LMG 12228 / 1C / PRS 101 / PAO1).